The sequence spans 160 residues: Na(+)/H(+) antiporter subunit E1 (160 aa).

A run of 4 helical transmembrane segments spans residues 1-21, 27-47, 49-69, and 101-121; these read MAIQ…VTGS, FILG…VLPG, FYLI…IELI, and WQIV…VLGI.

This sequence belongs to the CPA3 antiporters (TC 2.A.63) subunit E family. As to quaternary structure, may form a heterooligomeric complex that consists of seven subunits: mnhA1, mnhB1, mnhC1, mnhD1, mnhE1, mnhF1 and mnhG1.

The protein localises to the cell membrane. Its function is as follows. Mnh complex is a Na(+)/H(+) antiporter involved in Na(+) excretion. The polypeptide is Na(+)/H(+) antiporter subunit E1 (mnhE1) (Staphylococcus saprophyticus subsp. saprophyticus (strain ATCC 15305 / DSM 20229 / NCIMB 8711 / NCTC 7292 / S-41)).